Consider the following 305-residue polypeptide: Dermonecrotic toxin LiSicTox-alphaIA2aiii (305 aa).

The N-terminal stretch at 1-17 is a signal peptide; it reads LPYIALILVCWSVLSQA. The propeptide occupies 18-25; that stretch reads AQTDVEER. H37 is an active-site residue. Mg(2+) is bound by residues E57 and D59. The active-site Nucleophile is the H73. Intrachain disulfides connect C77–C83 and C79–C222. Mg(2+) is bound at residue D117. N-linked (GlcNAc...) asparagine glycosylation is present at N282.

The protein belongs to the arthropod phospholipase D family. Class II subfamily. Mg(2+) serves as cofactor. As to expression, expressed by the venom gland.

It localises to the secreted. It catalyses the reaction an N-(acyl)-sphingosylphosphocholine = an N-(acyl)-sphingosyl-1,3-cyclic phosphate + choline. The enzyme catalyses an N-(acyl)-sphingosylphosphoethanolamine = an N-(acyl)-sphingosyl-1,3-cyclic phosphate + ethanolamine. It carries out the reaction a 1-acyl-sn-glycero-3-phosphocholine = a 1-acyl-sn-glycero-2,3-cyclic phosphate + choline. The catalysed reaction is a 1-acyl-sn-glycero-3-phosphoethanolamine = a 1-acyl-sn-glycero-2,3-cyclic phosphate + ethanolamine. Its function is as follows. Dermonecrotic toxins cleave the phosphodiester linkage between the phosphate and headgroup of certain phospholipids (sphingolipid and lysolipid substrates), forming an alcohol (often choline) and a cyclic phosphate. This toxin acts on sphingomyelin (SM). It may also act on ceramide phosphoethanolamine (CPE), lysophosphatidylcholine (LPC) and lysophosphatidylethanolamine (LPE), but not on lysophosphatidylserine (LPS), and lysophosphatidylglycerol (LPG). It acts by transphosphatidylation, releasing exclusively cyclic phosphate products as second products. Induces dermonecrosis, hemolysis, increased vascular permeability, edema, inflammatory response, and platelet aggregation. The protein is Dermonecrotic toxin LiSicTox-alphaIA2aiii of Loxosceles intermedia (Brown spider).